A 355-amino-acid chain; its full sequence is DNA polymerase IV (355 aa).

The UmuC domain maps to 7-188; the sequence is IIHIDMDCFY…LPLSKIPGVG (182 aa). Positions 11 and 106 each coordinate Mg(2+). The active site involves E107.

It belongs to the DNA polymerase type-Y family. Monomer. The cofactor is Mg(2+).

Its subcellular location is the cytoplasm. The catalysed reaction is DNA(n) + a 2'-deoxyribonucleoside 5'-triphosphate = DNA(n+1) + diphosphate. Functionally, poorly processive, error-prone DNA polymerase involved in untargeted mutagenesis. Copies undamaged DNA at stalled replication forks, which arise in vivo from mismatched or misaligned primer ends. These misaligned primers can be extended by PolIV. Exhibits no 3'-5' exonuclease (proofreading) activity. May be involved in translesional synthesis, in conjunction with the beta clamp from PolIII. This chain is DNA polymerase IV, found in Mannheimia succiniciproducens (strain KCTC 0769BP / MBEL55E).